Consider the following 490-residue polypeptide: Secretory immunoglobulin A-binding protein EsiB (490 aa).

The signal sequence occupies residues 1–23 (MKKSLLAVMLTGLFALVSLPALG). Sel1-like repeat units follow at residues 39-74 (AKAQ…EQGY), 77-109 (AEYV…ALKG), 111-145 (PQAQ…AEQG), 153-182 (MGDA…EQGN), 185-218 (SCNQ…TSGD), 222-254 (QLHL…EQGN), 256-290 (IAQF…EQGN), 291-327 (SDGQ…EQGD), 328-361 (ATAQ…AAKG), 364-397 (AAQF…AEQG), and 399-430 (SAAQ…DTAS). Positions 122, 159, and 161 each coordinate Mg(2+).

Interacts with human secreted IgA (SIgA) at least via resides 244-260. Requires Mg(2+) as cofactor.

The protein localises to the cell surface. Functionally, upon host (human neutrophil) infection interferes with productive FCAR signaling, inhibiting secreted IgA (SIgA) effector functions and probably avoiding neutrophil activation. Inhibits the SIgA-mediated oxidative burst by neutrophils, decreases generation of ROS (reactive oxygen species) by neutrophils and reduces chemotaxis by neutrophils, all of which are SIgA effector functions used to stimulate the immune response. Does not block SIgA-binding to its receptor (FCAR) on neutrophils, but it decreases SIgA-stimulated phosphorylation of cytoplasmic proteins, including phospholipase C-gamma and MAP kinases, all actions that may be advantageous to the pathogen. This Escherichia coli O6:H1 (strain CFT073 / ATCC 700928 / UPEC) protein is Secretory immunoglobulin A-binding protein EsiB.